The following is a 600-amino-acid chain: Proline--tRNA ligase (600 aa).

The protein belongs to the class-II aminoacyl-tRNA synthetase family. ProS type 1 subfamily. Homodimer.

It is found in the cytoplasm. The enzyme catalyses tRNA(Pro) + L-proline + ATP = L-prolyl-tRNA(Pro) + AMP + diphosphate. Its function is as follows. Catalyzes the attachment of proline to tRNA(Pro) in a two-step reaction: proline is first activated by ATP to form Pro-AMP and then transferred to the acceptor end of tRNA(Pro). As ProRS can inadvertently accommodate and process non-cognate amino acids such as alanine and cysteine, to avoid such errors it has two additional distinct editing activities against alanine. One activity is designated as 'pretransfer' editing and involves the tRNA(Pro)-independent hydrolysis of activated Ala-AMP. The other activity is designated 'posttransfer' editing and involves deacylation of mischarged Ala-tRNA(Pro). The misacylated Cys-tRNA(Pro) is not edited by ProRS. The chain is Proline--tRNA ligase from Prochlorococcus marinus (strain MIT 9301).